Here is a 354-residue protein sequence, read N- to C-terminus: Small ribosomal subunit biogenesis GTPase RsgA (354 aa).

The disordered stretch occupies residues 1-46 (MSKKKPLSQGQLRRMRANHEKRLNRDSGDKNTPELQDSSLGPEQSG). The span at 17 to 32 (ANHEKRLNRDSGDKNT) shows a compositional bias: basic and acidic residues. Over residues 33-46 (PELQDSSLGPEQSG) the composition is skewed to polar residues. Positions 108–276 (HSSLSRPDLY…LIDSPGVREF (169 aa)) constitute a CP-type G domain. Residues 164–167 (NKID) and 218–226 (GQSGVGKSS) contribute to the GTP site. Residues Cys-300, Cys-305, His-307, and Cys-313 each contribute to the Zn(2+) site.

The protein belongs to the TRAFAC class YlqF/YawG GTPase family. RsgA subfamily. As to quaternary structure, monomer. Associates with 30S ribosomal subunit, binds 16S rRNA. Zn(2+) is required as a cofactor.

It is found in the cytoplasm. Functionally, one of several proteins that assist in the late maturation steps of the functional core of the 30S ribosomal subunit. Helps release RbfA from mature subunits. May play a role in the assembly of ribosomal proteins into the subunit. Circularly permuted GTPase that catalyzes slow GTP hydrolysis, GTPase activity is stimulated by the 30S ribosomal subunit. The chain is Small ribosomal subunit biogenesis GTPase RsgA from Shewanella oneidensis (strain ATCC 700550 / JCM 31522 / CIP 106686 / LMG 19005 / NCIMB 14063 / MR-1).